The sequence spans 178 residues: Killin (178 aa).

The DNA-binding element occupies 8-50; that stretch reads SARPGRTVHVWGYRVEWKVRNGRKLQPSEWAGRGDLGGFKRRW.

The protein localises to the nucleus. Functionally, DNA-binding protein involved in S phase checkpoint control-coupled apoptosis by mediating p53/TP53-induced apoptosis. Has the ability to inhibit DNA synthesis and S phase arrest coupled to apoptosis. Has affinity to both double- and single-stranded DNA. The chain is Killin (KLLN) from Homo sapiens (Human).